The chain runs to 71 residues: Small ribosomal subunit protein bS21 (71 aa).

Belongs to the bacterial ribosomal protein bS21 family.

This chain is Small ribosomal subunit protein bS21, found in Buchnera aphidicola subsp. Baizongia pistaciae (strain Bp).